The primary structure comprises 315 residues: Malate dehydrogenase (315 aa).

NAD(+)-binding positions include 11 to 16 and Asp-35; that span reads GAGHVG. Positions 84 and 90 each coordinate substrate. NAD(+)-binding positions include Asn-97 and 120–122; that span reads VTN. Substrate-binding residues include Asn-122 and Arg-153. Residue His-177 is the Proton acceptor of the active site.

This sequence belongs to the LDH/MDH superfamily. MDH type 3 family.

The enzyme catalyses (S)-malate + NAD(+) = oxaloacetate + NADH + H(+). Catalyzes the reversible oxidation of malate to oxaloacetate. The polypeptide is Malate dehydrogenase (Thermosulfidibacter takaii (strain DSM 17441 / JCM 13301 / NBRC 103674 / ABI70S6)).